A 540-amino-acid polypeptide reads, in one-letter code: Chaperonin GroEL 1 (540 aa).

Residues 30-33, lysine 51, 87-91, glycine 415, 480-482, and aspartate 496 contribute to the ATP site; these read TLGP, DGTTT, and NAA.

This sequence belongs to the chaperonin (HSP60) family. As to quaternary structure, forms a cylinder of 14 subunits composed of two heptameric rings stacked back-to-back. Interacts with the co-chaperonin GroES.

It is found in the cytoplasm. The enzyme catalyses ATP + H2O + a folded polypeptide = ADP + phosphate + an unfolded polypeptide.. Its function is as follows. Together with its co-chaperonin GroES, plays an essential role in assisting protein folding. The GroEL-GroES system forms a nano-cage that allows encapsulation of the non-native substrate proteins and provides a physical environment optimized to promote and accelerate protein folding. The polypeptide is Chaperonin GroEL 1 (Bradyrhizobium diazoefficiens (strain JCM 10833 / BCRC 13528 / IAM 13628 / NBRC 14792 / USDA 110)).